The chain runs to 504 residues: Cytochrome P450 monooxygenase gliF (504 aa).

A helical membrane pass occupies residues 13-31 (AVAVSFGVGLLYWVYRLLL). 2 N-linked (GlcNAc...) asparagine glycosylation sites follow: N197 and N299. C449 contributes to the heme binding site.

It belongs to the cytochrome P450 family. Requires heme as cofactor.

Its subcellular location is the membrane. Its pathway is mycotoxin biosynthesis. Functionally, cytochrome P450 monooxygenase; part of the gene cluster that mediates the biosynthesis of gliotoxin, a member of the epipolythiodioxopiperazine (ETP) class of toxins characterized by a disulfide bridged cyclic dipeptide. The first step in gliotoxin biosynthesis is the condensation of serine and phenylalanine to form the cyclo-L-phenylalanyl-L-serine diketopiperazine (DKP) by the NRPS gliP. GliP is also able to produce the DKP cyclo-L-tryptophanyl-L-serine, suggesting that the substrate specificity of the first adenylation (A) domain in gliP is sufficiently relaxed to accommodate both L-Phe and L-Trp. The cytochrome P450 monooxygenase gliC has been shown to catalyze the subsequent hydroxylation of the alpha-carbon of L-Phe in cyclo-L-phenylalanyl-L-serine whereas the second cytochrome P450 enzyme, gliF, is presumably involved in the modification of the DKP side chain. The glutathione S-transferase (GST) gliG then forms a bis-glutathionylated biosynthetic intermediate which is responsible for the sulfurization of gliotoxin. This bis-glutathionylated intermediate is subsequently processed by the gamma-glutamyl cyclotransferase gliK to remove both gamma-glutamyl moieties. Subsequent processing via gliI yields a biosynthetic intermediate, which is N-methylated via the N-methyltransferase gliN, before the gliotoxin oxidoreductase gliT-mediated disulfide bridge closure. GliN-mediated amide methylation confers stability to ETP, damping the spontaneous formation of tri- and tetrasulfides. Intracellular dithiol gliotoxin oxidized by gliT is subsequently effluxed by gliA. Gliotoxin contributes to pathogenesis during invasive aspergillosis. In macrophages and neutrophils, gliotoxin showed inhibition of various different cell functions including cytokine production, antigen presentation, phagocytosis, and production of reactive oxygen species. This chain is Cytochrome P450 monooxygenase gliF, found in Aspergillus fumigatus (strain ATCC MYA-4609 / CBS 101355 / FGSC A1100 / Af293) (Neosartorya fumigata).